A 225-amino-acid polypeptide reads, in one-letter code: Holliday junction branch migration complex subunit RuvA (225 aa).

The interval 1–71 is domain I; it reads MISWINGDLV…EDSDLLFGFT (71 aa). The domain II stretch occupies residues 72-150; that stretch reads SKDQKNFFIE…SEILSEEEKS (79 aa). The flexible linker stretch occupies residues 151-161; sequence KDEFEIKDPEI. The tract at residues 161-225 is domain III; sequence IIKMIEDLQL…LDEDSSNKDR (65 aa).

This sequence belongs to the RuvA family. Homotetramer. Forms an RuvA(8)-RuvB(12)-Holliday junction (HJ) complex. HJ DNA is sandwiched between 2 RuvA tetramers; dsDNA enters through RuvA and exits via RuvB. An RuvB hexamer assembles on each DNA strand where it exits the tetramer. Each RuvB hexamer is contacted by two RuvA subunits (via domain III) on 2 adjacent RuvB subunits; this complex drives branch migration. In the full resolvosome a probable DNA-RuvA(4)-RuvB(12)-RuvC(2) complex forms which resolves the HJ.

The protein resides in the cytoplasm. Functionally, the RuvA-RuvB-RuvC complex processes Holliday junction (HJ) DNA during genetic recombination and DNA repair, while the RuvA-RuvB complex plays an important role in the rescue of blocked DNA replication forks via replication fork reversal (RFR). RuvA specifically binds to HJ cruciform DNA, conferring on it an open structure. The RuvB hexamer acts as an ATP-dependent pump, pulling dsDNA into and through the RuvAB complex. HJ branch migration allows RuvC to scan DNA until it finds its consensus sequence, where it cleaves and resolves the cruciform DNA. This chain is Holliday junction branch migration complex subunit RuvA, found in Prochlorococcus marinus (strain AS9601).